Reading from the N-terminus, the 174-residue chain is Ribosome maturation factor RimM (174 aa).

The region spanning 97–169 (PDTYYDHQLE…ILEIDPPDGL (73 aa)) is the PRC barrel domain.

It belongs to the RimM family. As to quaternary structure, binds ribosomal protein uS19.

It is found in the cytoplasm. Its function is as follows. An accessory protein needed during the final step in the assembly of 30S ribosomal subunit, possibly for assembly of the head region. Essential for efficient processing of 16S rRNA. May be needed both before and after RbfA during the maturation of 16S rRNA. It has affinity for free ribosomal 30S subunits but not for 70S ribosomes. The chain is Ribosome maturation factor RimM from Mycobacterium ulcerans (strain Agy99).